The primary structure comprises 285 residues: Bifunctional protein FolD (285 aa).

Residues Gly-163–Ser-165 and Ser-188 contribute to the NADP(+) site.

This sequence belongs to the tetrahydrofolate dehydrogenase/cyclohydrolase family. Homodimer.

The enzyme catalyses (6R)-5,10-methylene-5,6,7,8-tetrahydrofolate + NADP(+) = (6R)-5,10-methenyltetrahydrofolate + NADPH. It catalyses the reaction (6R)-5,10-methenyltetrahydrofolate + H2O = (6R)-10-formyltetrahydrofolate + H(+). It participates in one-carbon metabolism; tetrahydrofolate interconversion. Catalyzes the oxidation of 5,10-methylenetetrahydrofolate to 5,10-methenyltetrahydrofolate and then the hydrolysis of 5,10-methenyltetrahydrofolate to 10-formyltetrahydrofolate. This is Bifunctional protein FolD from Lactococcus lactis subsp. cremoris (strain MG1363).